The primary structure comprises 258 residues: Adenylate kinase (258 aa).

52–57 (GAGKGT) is an ATP binding site. Positions 72–101 (ATGDMLRSQVAKKTELGKEAKKIMDQGGLV) are NMP. AMP-binding positions include Thr-73, Arg-78, 99-101 (GLV), 128-131 (GFPR), and Gln-135. Residues 169–206 (GRLVHPASGRSYHKVFNPPKQEMKDDITGEPLIQRSDD) are LID. ATP is bound by residues Arg-170 and 179–180 (SY). Residues Arg-203 and Arg-214 each coordinate AMP. Gln-242 is a binding site for ATP.

It belongs to the adenylate kinase family. AK2 subfamily. In terms of assembly, monomer.

The protein localises to the cytoplasm. It is found in the cytosol. The protein resides in the mitochondrion intermembrane space. The enzyme catalyses AMP + ATP = 2 ADP. Catalyzes the reversible transfer of the terminal phosphate group between ATP and AMP. Plays an important role in cellular energy homeostasis and in adenine nucleotide metabolism. Adenylate kinase activity is critical for regulation of the phosphate utilization and the AMP de novo biosynthesis pathways. This is Adenylate kinase (adk1) from Aspergillus oryzae (strain ATCC 42149 / RIB 40) (Yellow koji mold).